A 909-amino-acid chain; its full sequence is Coatomer subunit beta'-3 (909 aa).

9 WD repeats span residues 13 to 52 (QRSERVKSVDLHPTEPWILASLYSGTVCIWNYQTQTITKS), 55 to 94 (VTELPVRSAKFIPRKQWVVAGADDMYIRVYNYNTMDKVKV), 97 to 136 (AHSDYIRCVAVHPTLPYVLSSSDDMLIKLWDWENGWACTQ), 140 to 180 (GHSH…PNFT), 183 to 224 (AHQK…CVQT), 227 to 266 (GHTHNVSAVCFHPELPIIITGSEDGTVRIWHATTYRLENT), 269 to 309 (YGLE…ASMD), 351 to 390 (TCDLYPQSLKHNPNGRFVVVCGDGEYIIYTALAWRNRSFG), and 461 to 501 (QIDV…SHFD). The tract at residues 862–909 (EENGHVENEGDEEEQQEEEVNEEEGVVDADSTDGAVLVNGSEVLTPHP) is disordered. The span at 870-892 (EGDEEEQQEEEVNEEEGVVDADS) shows a compositional bias: acidic residues.

This sequence belongs to the WD repeat COPB2 family. As to quaternary structure, oligomeric complex that consists of at least the alpha, beta, beta', gamma, delta, epsilon and zeta subunits.

The protein resides in the cytoplasm. Its subcellular location is the golgi apparatus membrane. It localises to the cytoplasmic vesicle. The protein localises to the COPI-coated vesicle membrane. In terms of biological role, the coatomer is a cytosolic protein complex that binds to dilysine motifs and reversibly associates with Golgi non-clathrin-coated vesicles, which further mediate biosynthetic protein transport from the ER, via the Golgi up to the trans Golgi network. Coatomer complex is required for budding from Golgi membranes, and is essential for the retrograde Golgi-to-ER transport of dilysine-tagged proteins. This is Coatomer subunit beta'-3 from Arabidopsis thaliana (Mouse-ear cress).